The sequence spans 258 residues: Tetratricopeptide repeat protein 33 (258 aa).

TPR repeat units follow at residues Ser-59–Asp-92, Ala-93–Phe-126, and Val-127–Asn-160. The segment at Ser-231–Arg-258 is disordered. The segment covering Leu-238–Arg-258 has biased composition (basic and acidic residues).

This chain is Tetratricopeptide repeat protein 33 (ttc33), found in Xenopus laevis (African clawed frog).